Here is a 310-residue protein sequence, read N- to C-terminus: Porphobilinogen deaminase (310 aa).

Cys-241 carries the post-translational modification S-(dipyrrolylmethanemethyl)cysteine.

This sequence belongs to the HMBS family. Monomer. Dipyrromethane serves as cofactor.

The enzyme catalyses 4 porphobilinogen + H2O = hydroxymethylbilane + 4 NH4(+). The protein operates within porphyrin-containing compound metabolism; protoporphyrin-IX biosynthesis; coproporphyrinogen-III from 5-aminolevulinate: step 2/4. In terms of biological role, tetrapolymerization of the monopyrrole PBG into the hydroxymethylbilane pre-uroporphyrinogen in several discrete steps. The sequence is that of Porphobilinogen deaminase from Pelobacter propionicus (strain DSM 2379 / NBRC 103807 / OttBd1).